The primary structure comprises 128 residues: NADH-quinone oxidoreductase subunit A (128 aa).

Transmembrane regions (helical) follow at residues 9 to 29, 68 to 88, and 96 to 116; these read FPIA…LALA, LLFI…VLLL, and LGWA…AGLV.

The protein belongs to the complex I subunit 3 family. NDH-1 is composed of 14 different subunits. Subunits NuoA, H, J, K, L, M, N constitute the membrane sector of the complex.

Its subcellular location is the cell inner membrane. It carries out the reaction a quinone + NADH + 5 H(+)(in) = a quinol + NAD(+) + 4 H(+)(out). Functionally, NDH-1 shuttles electrons from NADH, via FMN and iron-sulfur (Fe-S) centers, to quinones in the respiratory chain. The immediate electron acceptor for the enzyme in this species is believed to be ubiquinone. Couples the redox reaction to proton translocation (for every two electrons transferred, four hydrogen ions are translocated across the cytoplasmic membrane), and thus conserves the redox energy in a proton gradient. This Anaeromyxobacter sp. (strain Fw109-5) protein is NADH-quinone oxidoreductase subunit A.